The following is a 405-amino-acid chain: Tryptophan synthase beta chain (405 aa).

Position 98 is an N6-(pyridoxal phosphate)lysine (lysine 98).

Belongs to the TrpB family. In terms of assembly, tetramer of two alpha and two beta chains. Requires pyridoxal 5'-phosphate as cofactor.

The enzyme catalyses (1S,2R)-1-C-(indol-3-yl)glycerol 3-phosphate + L-serine = D-glyceraldehyde 3-phosphate + L-tryptophan + H2O. It functions in the pathway amino-acid biosynthesis; L-tryptophan biosynthesis; L-tryptophan from chorismate: step 5/5. Functionally, the beta subunit is responsible for the synthesis of L-tryptophan from indole and L-serine. This is Tryptophan synthase beta chain from Parvibaculum lavamentivorans (strain DS-1 / DSM 13023 / NCIMB 13966).